The following is an 89-amino-acid chain: Small ribosomal subunit protein uS14 (89 aa).

A disordered region spans residues Asp32–Arg51.

Belongs to the universal ribosomal protein uS14 family. In terms of assembly, part of the 30S ribosomal subunit. Contacts proteins S3 and S10.

Binds 16S rRNA, required for the assembly of 30S particles and may also be responsible for determining the conformation of the 16S rRNA at the A site. This is Small ribosomal subunit protein uS14 from Christiangramia forsetii (strain DSM 17595 / CGMCC 1.15422 / KT0803) (Gramella forsetii).